A 240-amino-acid polypeptide reads, in one-letter code: MADS-box protein SVP (240 aa).

One can recognise an MADS-box domain in the interval 3-57 (REKIQIRKIDNATARQVTFSKRRRGLFKKAEELSVLCDADVALIIFSSTGKLFEF). The K-box domain maps to 87-180 (QLVENSDHAR…GTQLTEENER (94 aa)). The segment at 202-240 (VYEEGQSSESITNAGNSTGAPVDSESSDTSLRLGLPYGG) is disordered. Over residues 206 to 220 (GQSSESITNAGNSTG) the composition is skewed to polar residues.

In terms of assembly, forms a heterodimer with AP1 and SVP. Interacts with the SEU-LUG corepressor complex when complexed to AP1. Interacts with AGL15. Interacts with AGL16. In terms of tissue distribution, detected in roots and leaves. Expressed at very low levels in flowers and siliques. Present in floral meristems.

The protein localises to the nucleus. Transcription repressor that inhibit floral transition in the autonomous flowering pathway, independent of photoperiod and temperature. Acts in a dosage-dependent manner. Together with AGL24 and AP1, controls the identity of the floral meristem and regulates expression of class B, C and E genes. Promotes EFM expression to suppress flowering. This is MADS-box protein SVP from Arabidopsis thaliana (Mouse-ear cress).